The chain runs to 173 residues: Co-chaperone protein HscB homolog (173 aa).

One can recognise a J domain in the interval 5 to 77; it reads CHYALFDLQP…PRRARYLLAI (73 aa).

The protein belongs to the HscB family. Interacts with HscA and stimulates its ATPase activity.

Its function is as follows. Co-chaperone involved in the maturation of iron-sulfur cluster-containing proteins. Seems to help targeting proteins to be folded toward HscA. In Pseudomonas entomophila (strain L48), this protein is Co-chaperone protein HscB homolog.